The primary structure comprises 777 residues: MSNLRIFAVNQKKISSLHYFNNMCSSKIRASLKRLKLHVLLGRNYSSLPGLIGNDIKSLHSIINPPIAKIRNIGIMAHIDAGKTTTTERILYYSGYTRSLGDVDDGDTVTDFMAQERERGITIQSAAVTFDWKGYRINLIDTPGHVDFTLEVERCLRVLDGAVAVFDASAGVEAQTLTVWRQADKHKVPRICFLNKMDKIGASFNYAVESIREKLKAKPLLLQLPIGEGKAFKGVVDVVRTEKLLWNPNSDDGKDFERKPLLEMSDPKLLKETTEARNALIEQVADLDDEFADLVLGEFSENFDLLPAEKLQTAIHRVTLAQTAVPVLCGSALKNKGVQPLLDAITMYLPSPEERNYEFLQWYKGDLCALAFKVLHDKQRGPLVFMRIYSGMLKPQTAIHNINGNCTERVSRLLLPFADQHIEIPLLTAGNIALTVGLKHTATGDTIVSSRSSALAASRRAKREGEKKQKENNEAERLLLAGVEIPEPVFFCTIEPPSMAKQPDLDHALKCLQREDPSLKVKLDPDSGQTVLCGMGELHIEIIHDRIKREYGLETYLGPLQVAYREAILNSIRATDTLDRTLGDKRHLVTVELEAKPVETSSLLPVIEYAASVAGDLSQASREAFENGVHSACLQGPLLGSPVQDVAVTLHSLVIHPGTSTTMISACVSRCLQKALKKADKQILEPLMNLEVTVSREYLSPVLADLAQRRGNIQEIQSRQDNKVVIGYVPLAEIMGYSTVLRTLTSGSATFALELSNYQAMNPQDQSTLLSQRHGLS.

Positions 68-353 (AKIRNIGIMA…AITMYLPSPE (286 aa)) constitute a tr-type G domain. Residues 77-84 (AHIDAGKT), 141-145 (DTPGH), and 195-198 (NKMD) contribute to the GTP site.

This sequence belongs to the TRAFAC class translation factor GTPase superfamily. Classic translation factor GTPase family. EF-G/EF-2 subfamily.

The protein resides in the mitochondrion. It carries out the reaction GTP + H2O = GDP + phosphate + H(+). Its function is as follows. Mitochondrial GTPase that mediates the disassembly of ribosomes from messenger RNA at the termination of mitochondrial protein biosynthesis. Acts in collaboration with MRRF. GTP hydrolysis follows the ribosome disassembly and probably occurs on the ribosome large subunit. Not involved in the GTP-dependent ribosomal translocation step during translation elongation. The chain is Ribosome-releasing factor 2, mitochondrial from Bos taurus (Bovine).